A 74-amino-acid chain; its full sequence is Exodeoxyribonuclease 7 small subunit (74 aa).

It belongs to the XseB family. In terms of assembly, heterooligomer composed of large and small subunits.

The protein localises to the cytoplasm. The enzyme catalyses Exonucleolytic cleavage in either 5'- to 3'- or 3'- to 5'-direction to yield nucleoside 5'-phosphates.. In terms of biological role, bidirectionally degrades single-stranded DNA into large acid-insoluble oligonucleotides, which are then degraded further into small acid-soluble oligonucleotides. This is Exodeoxyribonuclease 7 small subunit from Glaesserella parasuis serovar 5 (strain SH0165) (Haemophilus parasuis).